A 96-amino-acid chain; its full sequence is Small ribosomal subunit protein bS6 (96 aa).

The protein belongs to the bacterial ribosomal protein bS6 family.

Functionally, binds together with bS18 to 16S ribosomal RNA. In Mycobacterium bovis (strain ATCC BAA-935 / AF2122/97), this protein is Small ribosomal subunit protein bS6 (rpsF).